Here is a 119-residue protein sequence, read N- to C-terminus: Ribonuclease P protein component (119 aa).

This sequence belongs to the RnpA family. As to quaternary structure, consists of a catalytic RNA component (M1 or rnpB) and a protein subunit.

It carries out the reaction Endonucleolytic cleavage of RNA, removing 5'-extranucleotides from tRNA precursor.. RNaseP catalyzes the removal of the 5'-leader sequence from pre-tRNA to produce the mature 5'-terminus. It can also cleave other RNA substrates such as 4.5S RNA. The protein component plays an auxiliary but essential role in vivo by binding to the 5'-leader sequence and broadening the substrate specificity of the ribozyme. The polypeptide is Ribonuclease P protein component (Streptococcus equi subsp. zooepidemicus (strain MGCS10565)).